The primary structure comprises 185 residues: Large ribosomal subunit protein uL5 (185 aa).

This sequence belongs to the universal ribosomal protein uL5 family. As to quaternary structure, part of the 50S ribosomal subunit; part of the 5S rRNA/L5/L18/L25 subcomplex. Contacts the 5S rRNA and the P site tRNA. Forms a bridge to the 30S subunit in the 70S ribosome.

In terms of biological role, this is one of the proteins that bind and probably mediate the attachment of the 5S RNA into the large ribosomal subunit, where it forms part of the central protuberance. In the 70S ribosome it contacts protein S13 of the 30S subunit (bridge B1b), connecting the 2 subunits; this bridge is implicated in subunit movement. Contacts the P site tRNA; the 5S rRNA and some of its associated proteins might help stabilize positioning of ribosome-bound tRNAs. The polypeptide is Large ribosomal subunit protein uL5 (Nitrobacter hamburgensis (strain DSM 10229 / NCIMB 13809 / X14)).